The chain runs to 351 residues: Biotin synthase (351 aa).

The Radical SAM core domain occupies 48-265 (NKVRIHILDN…LCMFRLINPD (218 aa)). The [4Fe-4S] cluster site is built by Cys63, Cys67, and Cys70. 4 residues coordinate [2Fe-2S] cluster: Cys107, Cys139, Cys199, and Arg269.

This sequence belongs to the radical SAM superfamily. Biotin synthase family. As to quaternary structure, homodimer. It depends on [4Fe-4S] cluster as a cofactor. The cofactor is [2Fe-2S] cluster.

The enzyme catalyses (4R,5S)-dethiobiotin + (sulfur carrier)-SH + 2 reduced [2Fe-2S]-[ferredoxin] + 2 S-adenosyl-L-methionine = (sulfur carrier)-H + biotin + 2 5'-deoxyadenosine + 2 L-methionine + 2 oxidized [2Fe-2S]-[ferredoxin]. Its pathway is cofactor biosynthesis; biotin biosynthesis; biotin from 7,8-diaminononanoate: step 2/2. Catalyzes the conversion of dethiobiotin (DTB) to biotin by the insertion of a sulfur atom into dethiobiotin via a radical-based mechanism. The sequence is that of Biotin synthase from Leptospira interrogans serogroup Icterohaemorrhagiae serovar Lai (strain 56601).